We begin with the raw amino-acid sequence, 32 residues long: Fimbrin sef21 (32 aa).

Its subcellular location is the fimbrium. This is Fimbrin sef21 from Salmonella enteritidis.